The sequence spans 339 residues: Anthranilate phosphoribosyltransferase (339 aa).

5-phospho-alpha-D-ribose 1-diphosphate-binding positions include G79, 82-83 (GD), S87, 89-92 (NIST), 107-115 (KHGNRSISS), and S119. Position 79 (G79) interacts with anthranilate. S91 is a Mg(2+) binding site. N110 serves as a coordination point for anthranilate. R165 is a binding site for anthranilate. The Mg(2+) site is built by D224 and E225.

The protein belongs to the anthranilate phosphoribosyltransferase family. In terms of assembly, homodimer. Mg(2+) is required as a cofactor.

The enzyme catalyses N-(5-phospho-beta-D-ribosyl)anthranilate + diphosphate = 5-phospho-alpha-D-ribose 1-diphosphate + anthranilate. The protein operates within amino-acid biosynthesis; L-tryptophan biosynthesis; L-tryptophan from chorismate: step 2/5. Its function is as follows. Catalyzes the transfer of the phosphoribosyl group of 5-phosphorylribose-1-pyrophosphate (PRPP) to anthranilate to yield N-(5'-phosphoribosyl)-anthranilate (PRA). The protein is Anthranilate phosphoribosyltransferase of Listeria monocytogenes serotype 4b (strain CLIP80459).